A 396-amino-acid polypeptide reads, in one-letter code: Ribosomal RNA large subunit methyltransferase I (396 aa).

The PUA domain occupies 2 to 79 (AVRIKLKPGR…REEEIDREFF (78 aa)).

The protein belongs to the methyltransferase superfamily. RlmI family.

It is found in the cytoplasm. The enzyme catalyses cytidine(1962) in 23S rRNA + S-adenosyl-L-methionine = 5-methylcytidine(1962) in 23S rRNA + S-adenosyl-L-homocysteine + H(+). Specifically methylates the cytosine at position 1962 (m5C1962) of 23S rRNA. This is Ribosomal RNA large subunit methyltransferase I from Shewanella sp. (strain MR-7).